The primary structure comprises 253 residues: ER membrane protein complex subunit 3 (253 aa).

3 consecutive transmembrane segments (helical) span residues 10 to 30 (WVLL…QYIM), 126 to 146 (FIPQ…FILM), and 176 to 196 (SISW…LIGL).

It belongs to the EMC3 family. In terms of assembly, component of the ER membrane protein complex (EMC), which is composed of EMC1, EMC2, EMC3, EMC4, EMC5 and EMC6.

It is found in the endoplasmic reticulum membrane. Its function is as follows. The EMC seems to be required for efficient folding of proteins in the endoplasmic reticulum (ER). This Saccharomyces cerevisiae (strain YJM789) (Baker's yeast) protein is ER membrane protein complex subunit 3 (AIM27).